The following is a 490-amino-acid chain: Cytochrome P450 71A22 (490 aa).

The helical transmembrane segment at 2–22 (ESMIRIILLSLIIFITILFFI) threads the bilayer. Residue Cys432 participates in heme binding.

Belongs to the cytochrome P450 family. Heme is required as a cofactor.

It is found in the membrane. This chain is Cytochrome P450 71A22 (CYP71A22), found in Arabidopsis thaliana (Mouse-ear cress).